The primary structure comprises 384 residues: MFLHNTKFCRLASGLAGGVRNLSGQKPKTAILMLNMGGPTHTDQVHDYLLRIMTDRDMIQLPVQSRLGPWIAQRRTPEVQKKYKEIGGGSPILKWTELQGQLMCEQLDRISPETAPHKHYVGFRYVNPLTENTLAEIEKDKPERVVLFSQYPQYSCATSGSSFNSIFTHYRSNNLPSDIKWSIIDRWGTHPLLIKTFAQRIRDELAKFVETKRNDVVILFTAHSLPLKAVNRGDAYPSEIGASVHMVMQELGQTNPYSLAWQSKVGPLPWLAPATDDAIKGYVKQGLKNFILVPIAFVNEHIETLHELDIEYCDELAKEVGVEEIRRAATPNDHPLFIDALTNVVADHLKSQQAVNPKFLMRCPMCSNPKCRESKSWYRQLCSN.

Residue cysteine 156 coordinates [2Fe-2S] cluster. Active-site residues include histidine 190 and asparagine 343. Residues cysteine 363, cysteine 366, and cysteine 371 each coordinate [2Fe-2S] cluster.

It belongs to the ferrochelatase family. As to quaternary structure, homodimer. Homotetramer. [2Fe-2S] cluster serves as cofactor.

It is found in the mitochondrion inner membrane. The catalysed reaction is heme b + 2 H(+) = protoporphyrin IX + Fe(2+). It functions in the pathway porphyrin-containing compound metabolism; protoheme biosynthesis; protoheme from protoporphyrin-IX: step 1/1. Functionally, catalyzes the ferrous insertion into protoporphyrin IX. Terminal enzyme in heme biosynthesis. Contains four conserved cysteines that function as cluster ligands and play a crucial role in maintaining protein structure. This Drosophila melanogaster (Fruit fly) protein is Ferrochelatase, mitochondrial.